The chain runs to 889 residues: MSGKSVSFYVSENIDVPLQIKILSLKGKKRQLRASEKLIDPQLSLTMSNVKIFSDMLVSVQVYDELTLGDVTVPVFAPYVPFRYGRNWDQWVTLPVSVRHLTPACKLRIVLWEFNGQRRIPFKTITTPIFKDLDFTLKRGIEAIKFTKQGKPSIETVKTLETINKYFYGDYAKKEWIDELVLKKLYKEYEKIDLPLDTFMLTIQFPVIELPIIYTEKPREDIQKNIPTLSNFDAASAFSVDHSTSNNTAVTSVDPKLKIPMGNKYNSTLKFYDPDQFNNDPIEEKFRKLERASKHNTSDKHVKPDAKKRDYLKKIIDYPPGKRLSAHEKGSIWKYRYYLQNNKKALTKLLQSTNLKDETERTEVLEMMDGWAEIDIDDALGLLGHKYRNLAVRTYAVNRLKKASDKELELYLLQLVQAVCFENLNTFSDTSNSKFTVVDFSSSSQMMKTRNTQRSESQNIMNSHIENNNPKFIHSIHSEDDSQIEELPVVISPLAEFLIRRALVNKRLGNYFYWYITSESYDQPFLNQILESFLSRLNSNDRNEIEKQVKLLTLLRNCCEEIKSLKDTVSKKKELLQTLLSTKVRPYLKKRLVKLPLDPDIVLNDVMIDQCNVFKSSLSPLMITFHTENGGVYPLMYKVGDDLRQDQLVVQIISLMNELLKNENVDLKLLPYTILATGLEEGAIQFIPNLTMADILNKYHGILPFFRAHHPDKDEELGVKSWVIDNFVKSCAGYCVITYLLGVGDRHLDNLLITEGGQFFHADFGYILGQDPKPFPPLMKLPPQIIEAFGGTDSSNYNKFRSYCFVAYSILRRNAGLILNLFELMKTSNIPDIRVDPEGSIMKVKERFNLDLTEEEATIHFQTLINDSVNALLPIVIDHLHNLAQYWRA.

A C2 PI3K-type domain is found at 34–184 (ASEKLIDPQL…EWIDELVLKK (151 aa)). The PIK helical domain maps to 298–540 (SDKHVKPDAK…ESFLSRLNSN (243 aa)). Residues 607–873 (MIDQCNVFKS…LINDSVNALL (267 aa)) enclose the PI3K/PI4K catalytic domain. A G-loop region spans residues 613–619 (VFKSSLS). The interval 742-750 (GVGDRHLDN) is catalytic loop. The tract at residues 761-782 (HADFGYILGQDPKPFPPLMKLP) is activation loop.

The protein belongs to the PI3/PI4-kinase family. Type III PI4K subfamily. Component of the autophagy-specific VPS34 PI3-kinase complex I composed of VPS15, VPS30, VPS34, ATG14 and ATG38; and of the VPS34 PI3-kinase complex II composed of VPS15, VPS30, VPS34 and VPS38. Autophosphorylated.

It is found in the golgi apparatus. It localises to the trans-Golgi network membrane. Its subcellular location is the endosome membrane. The enzyme catalyses a 1,2-diacyl-sn-glycero-3-phospho-(1D-myo-inositol) + ATP = a 1,2-diacyl-sn-glycero-3-phospho-(1D-myo-inositol-3-phosphate) + ADP + H(+). Functionally, multifunctional phosphatidylinositol 3-kinase that plays a role in signaling in modulation of host immune response, intracellular survival and virulence. Catalytic subunit of the autophagy-specific VPS34 PI3-kinase complex I essential to recruit the ATG8-phosphatidylinositol conjugate and the ATG12-ATG5 conjugate to the pre-autophagosomal structure. Also involved in endosome-to-Golgi retrograde transport as part of the VPS34 PI3-kinase complex II. This second complex is required for the endosome-to-Golgi retrieval of PEP1 and KEX2, and the recruitment of VPS5 and VPS7, two components of the retromer complex, to endosomal membranes (probably through the synthesis of a specific pool of phosphatidylinositol 3-phosphate recruiting the retromer to the endosomes). Finally, it might also be involved in ethanol tolerance and cell wall integrity. The polypeptide is Phosphatidylinositol 3-kinase VPS34 (Candida glabrata (strain ATCC 2001 / BCRC 20586 / JCM 3761 / NBRC 0622 / NRRL Y-65 / CBS 138) (Yeast)).